The following is a 247-amino-acid chain: 7-carboxy-7-deazaguanine synthase (247 aa).

Substrate contacts are provided by residues 15-17 (IQG) and arginine 30. The 227-residue stretch at 21–247 (LVGRRQIFVR…PQMHRALGLR (227 aa)) folds into the Radical SAM core domain. The [4Fe-4S] cluster site is built by cysteine 34, cysteine 38, and cysteine 41. Threonine 43 provides a ligand contact to Mg(2+). Residue threonine 78 participates in substrate binding. Glycine 80 lines the S-adenosyl-L-methionine pocket.

The protein belongs to the radical SAM superfamily. 7-carboxy-7-deazaguanine synthase family. In terms of assembly, homodimer. The cofactor is [4Fe-4S] cluster. S-adenosyl-L-methionine is required as a cofactor. It depends on Mg(2+) as a cofactor.

The enzyme catalyses 6-carboxy-5,6,7,8-tetrahydropterin + H(+) = 7-carboxy-7-deazaguanine + NH4(+). The protein operates within purine metabolism; 7-cyano-7-deazaguanine biosynthesis. Its function is as follows. Catalyzes the complex heterocyclic radical-mediated conversion of 6-carboxy-5,6,7,8-tetrahydropterin (CPH4) to 7-carboxy-7-deazaguanine (CDG), a step common to the biosynthetic pathways of all 7-deazapurine-containing compounds. The polypeptide is 7-carboxy-7-deazaguanine synthase (Methanothermobacter thermautotrophicus (strain ATCC 29096 / DSM 1053 / JCM 10044 / NBRC 100330 / Delta H) (Methanobacterium thermoautotrophicum)).